Consider the following 446-residue polypeptide: Chromosomal replication initiator protein DnaA (446 aa).

A domain I, interacts with DnaA modulators region spans residues 1–72 (MENILDLWNQ…ADTIYELTGE (72 aa)). Positions 72–109 (EELSVKFVIPQNQDEENFLPKPQVKKAAKEEPSDFPQS) are domain II. A domain III, AAA+ region region spans residues 110–326 (MLNPKYTFDT…GALIRVVAYS (217 aa)). 4 residues coordinate ATP: Gly-154, Gly-156, Lys-157, and Thr-158. The tract at residues 327–446 (SLINKDINAD…QVKEIKELLK (120 aa)) is domain IV, binds dsDNA.

The protein belongs to the DnaA family. Oligomerizes as a right-handed, spiral filament on DNA at oriC.

It localises to the cytoplasm. Functionally, plays an essential role in the initiation and regulation of chromosomal replication. ATP-DnaA binds to the origin of replication (oriC) to initiate formation of the DNA replication initiation complex once per cell cycle. Binds the DnaA box (a 9 base pair repeat at the origin) and separates the double-stranded (ds)DNA. Forms a right-handed helical filament on oriC DNA; dsDNA binds to the exterior of the filament while single-stranded (ss)DNA is stabiized in the filament's interior. The ATP-DnaA-oriC complex binds and stabilizes one strand of the AT-rich DNA unwinding element (DUE), permitting loading of DNA polymerase. After initiation quickly degrades to an ADP-DnaA complex that is not apt for DNA replication. Binds acidic phospholipids. The sequence is that of Chromosomal replication initiator protein DnaA from Bacillus velezensis (strain DSM 23117 / BGSC 10A6 / LMG 26770 / FZB42) (Bacillus amyloliquefaciens subsp. plantarum).